A 435-amino-acid polypeptide reads, in one-letter code: Trigger factor (435 aa).

Residues 164–249 (GDFAKFDFEG…LHEIQGKKAG (86 aa)) form the PPIase FKBP-type domain.

Belongs to the FKBP-type PPIase family. Tig subfamily.

The protein resides in the cytoplasm. It catalyses the reaction [protein]-peptidylproline (omega=180) = [protein]-peptidylproline (omega=0). Involved in protein export. Acts as a chaperone by maintaining the newly synthesized protein in an open conformation. Functions as a peptidyl-prolyl cis-trans isomerase. This chain is Trigger factor, found in Campylobacter fetus subsp. fetus (strain 82-40).